We begin with the raw amino-acid sequence, 126 residues long: Aspartate 1-decarboxylase (126 aa).

Ser25 acts as the Schiff-base intermediate with substrate; via pyruvic acid in catalysis. At Ser25 the chain carries Pyruvic acid (Ser). Thr57 lines the substrate pocket. The active-site Proton donor is the Tyr58. 73-75 serves as a coordination point for substrate; that stretch reads GAA.

The protein belongs to the PanD family. In terms of assembly, heterooctamer of four alpha and four beta subunits. Pyruvate serves as cofactor. Is synthesized initially as an inactive proenzyme, which is activated by self-cleavage at a specific serine bond to produce a beta-subunit with a hydroxyl group at its C-terminus and an alpha-subunit with a pyruvoyl group at its N-terminus.

Its subcellular location is the cytoplasm. It carries out the reaction L-aspartate + H(+) = beta-alanine + CO2. It functions in the pathway cofactor biosynthesis; (R)-pantothenate biosynthesis; beta-alanine from L-aspartate: step 1/1. Catalyzes the pyruvoyl-dependent decarboxylation of aspartate to produce beta-alanine. The sequence is that of Aspartate 1-decarboxylase from Chromohalobacter salexigens (strain ATCC BAA-138 / DSM 3043 / CIP 106854 / NCIMB 13768 / 1H11).